The sequence spans 548 residues: Membrane protein insertase YidC (548 aa).

5 helical membrane-spanning segments follow: residues 6-26, 357-377, 424-444, 455-475, and 503-523; these read NLILIGLLFVSFLLWQQWESD, NWGVAIIMLTLLVRGIMFPLT, LGGCLPILVQMPIFIALYWAL, FALWITDLSVKDPFFVLPILM, and PIIFTFMFLWFPAGLTLYWLV.

Belongs to the OXA1/ALB3/YidC family. Type 1 subfamily. Interacts with the Sec translocase complex via SecD. Specifically interacts with transmembrane segments of nascent integral membrane proteins during membrane integration.

The protein resides in the cell inner membrane. Required for the insertion and/or proper folding and/or complex formation of integral membrane proteins into the membrane. Involved in integration of membrane proteins that insert both dependently and independently of the Sec translocase complex, as well as at least some lipoproteins. Aids folding of multispanning membrane proteins. The polypeptide is Membrane protein insertase YidC (Aeromonas hydrophila subsp. hydrophila (strain ATCC 7966 / DSM 30187 / BCRC 13018 / CCUG 14551 / JCM 1027 / KCTC 2358 / NCIMB 9240 / NCTC 8049)).